A 308-amino-acid polypeptide reads, in one-letter code: MSEQFLYFLQQMFNGVTLGSTYALIAIGYTMVYGIIGMINFAHGEVYMIGSYVSFMIIAALMMMGIDTGWLLVAAGFVGAIVIASAYGWSIERVAYRPVRNSKRLIALISAIGMSIFLQNYVSLTEGSRDVALPSLFNGQWVVGHSENFSASITTMQAVIWIVTFLAMLALTIFIRYSRMGRACRACAEDLKMASLLGINTDRVIALTFVIGAAMAAVAGVLLGQFYGVINPYIGFMAGMKAFTAAVLGGIGSIPGAMIGGLILGIAEALSSAYLSTEYKDVVSFALLILVLLVMPTGILGRPEVEKV.

The Cytoplasmic portion of the chain corresponds to 1–21 (MSEQFLYFLQQMFNGVTLGST). Residues 22 to 42 (YALIAIGYTMVYGIIGMINFA) form a helical membrane-spanning segment. Over 43–45 (HGE) the chain is Periplasmic. The chain crosses the membrane as a helical span at residues 46–66 (VYMIGSYVSFMIIAALMMMGI). At 67–68 (DT) the chain is on the cytoplasmic side. The chain crosses the membrane as a helical span at residues 69–89 (GWLLVAAGFVGAIVIASAYGW). Residues 90-104 (SIERVAYRPVRNSKR) lie on the Periplasmic side of the membrane. The helical transmembrane segment at 105 to 125 (LIALISAIGMSIFLQNYVSLT) threads the bilayer. At 126–154 (EGSRDVALPSLFNGQWVVGHSENFSASIT) the chain is on the cytoplasmic side. A helical membrane pass occupies residues 155–175 (TMQAVIWIVTFLAMLALTIFI). At 176 to 203 (RYSRMGRACRACAEDLKMASLLGINTDR) the chain is on the periplasmic side. A helical membrane pass occupies residues 204 to 224 (VIALTFVIGAAMAAVAGVLLG). At 225–245 (QFYGVINPYIGFMAGMKAFTA) the chain is on the cytoplasmic side. The chain crosses the membrane as a helical span at residues 246–266 (AVLGGIGSIPGAMIGGLILGI). The Periplasmic portion of the chain corresponds to 267–280 (AEALSSAYLSTEYK). The chain crosses the membrane as a helical span at residues 281-301 (DVVSFALLILVLLVMPTGILG). Residues 302–308 (RPEVEKV) lie on the Cytoplasmic side of the membrane.

Belongs to the binding-protein-dependent transport system permease family. LivHM subfamily.

The protein localises to the cell inner membrane. Part of the binding-protein-dependent transport system for branched-chain amino acids. Probably responsible for the translocation of the substrates across the membrane. This Escherichia coli O157:H7 protein is High-affinity branched-chain amino acid transport system permease protein LivH (livH).